Here is a 285-residue protein sequence, read N- to C-terminus: Probable endonuclease 4 (285 aa).

9 residues coordinate Zn(2+): histidine 69, histidine 109, glutamate 145, aspartate 179, histidine 182, histidine 216, aspartate 229, histidine 231, and glutamate 261.

The protein belongs to the AP endonuclease 2 family. The cofactor is Zn(2+).

The enzyme catalyses Endonucleolytic cleavage to 5'-phosphooligonucleotide end-products.. Its function is as follows. Endonuclease IV plays a role in DNA repair. It cleaves phosphodiester bonds at apurinic or apyrimidinic (AP) sites, generating a 3'-hydroxyl group and a 5'-terminal sugar phosphate. This Shigella dysenteriae serotype 1 (strain Sd197) protein is Probable endonuclease 4.